Consider the following 438-residue polypeptide: Putative formin-like protein 21a (438 aa).

A disordered region spans residues methionine 1–proline 74. Positions proline 22–alanine 61 are enriched in pro residues. The region spanning phenylalanine 124–isoleucine 438 is the FH2 domain.

The protein belongs to the formin-like family. Class-II subfamily.

This Arabidopsis thaliana (Mouse-ear cress) protein is Putative formin-like protein 21a (FH21A).